Reading from the N-terminus, the 2410-residue chain is Dual specificity protein kinase splA (2410 aa).

Disordered stretches follow at residues 29-48 (NNNN…NNNN), 66-103 (NHPS…GELT), 116-158 (NTQT…SNGG), 187-252 (NISP…SSGI), 508-647 (QQLQ…VPSA), and 659-820 (SSSS…KKEG). 2 stretches are compositionally biased toward low complexity: residues 116 to 128 (NTQT…TSPN) and 137 to 158 (NTTT…SNGG). The segment covering 514–525 (QPPPTIQPPPQQ) has biased composition (pro residues). Residues 530 to 544 (LRGNRSSGNLSGLNS) are compositionally biased toward low complexity. Residues 545-554 (FSLKQSTDSL) are compositionally biased toward polar residues. The span at 560–583 (SQQSTVSSNSTPIAATPISPLTAP) shows a compositional bias: low complexity. Over residues 584–594 (TSPPPPPPPPT) the composition is skewed to pro residues. Low complexity-rich tracts occupy residues 595–618 (NFNS…NTTV), 627–639 (VLPK…SPRP), 659–686 (SSSS…LNIS), 701–738 (SPSY…SPSV), 746–759 (ISPN…PNIS), and 777–813 (NTNN…NNTN). 2 consecutive B30.2/SPRY domains span residues 822 to 1004 (SSWF…GPFS) and 1020 to 1209 (DSGG…PPFK). Disordered stretches follow at residues 1228–1428 (PNGN…NNIY) and 1493–1512 (SLGV…PRKI). Composition is skewed to low complexity over residues 1229–1359 (NGNN…NNNI), 1373–1399 (SSTG…NNSS), 1419–1428 (SSTNNNNNIY), and 1493–1507 (SLGV…SPKT). The B30.2/SPRY 3 domain occupies 1481–1703 (PITASTNHTL…CVATFPGGHF (223 aa)). In terms of domain architecture, SAM spans 1734 to 1798 (WAPNDVAIWL…INRLNRMIQI (65 aa)). Residues 1862–2105 (KSYTQKEIED…PPPPPQLPVR (244 aa)) are disordered. A compositionally biased stretch (basic and acidic residues) spans 1865 to 1874 (TQKEIEDRNR). Over residues 1951 to 1967 (SVSSTGGSSGFLTFPSS) the composition is skewed to low complexity. Polar residues predominate over residues 1989-2002 (ITSNYKGITNTGQP). The segment covering 2020–2070 (SNNGNNGNNNNNNNNNNIKANQQQQQQSSYQQSQTQQQQQHITSTSTSTTN) has biased composition (low complexity). Residues 2089-2102 (PSRPPPPPPPPPQL) are compositionally biased toward pro residues. The Protein kinase domain maps to 2115–2387 (LEFGQTIGKG…FKQIIVHLKE (273 aa)). ATP contacts are provided by residues 2121-2129 (IGKGFFGEV) and Lys-2142. Asp-2243 acts as the Proton acceptor in catalysis.

It belongs to the protein kinase superfamily. TKL Tyr protein kinase family. In terms of processing, tyrosine kinase domain is capable of autophosphorylation, in vitro; however it is also autophosphorylated on serine and threonine residues.

The enzyme catalyses L-tyrosyl-[protein] + ATP = O-phospho-L-tyrosyl-[protein] + ADP + H(+). In terms of biological role, essential for spore differentiation. The sequence is that of Dual specificity protein kinase splA (splA) from Dictyostelium discoideum (Social amoeba).